The chain runs to 122 residues: Small ribosomal subunit protein bS16 (122 aa).

Residues 87–122 are disordered; the sequence is AQSNPKKALPKKKAQERAAASAAAAEKAAAAAAPEA. Low complexity predominate over residues 103–122; the sequence is RAAASAAAAEKAAAAAAPEA.

This sequence belongs to the bacterial ribosomal protein bS16 family.

This chain is Small ribosomal subunit protein bS16, found in Methylocella silvestris (strain DSM 15510 / CIP 108128 / LMG 27833 / NCIMB 13906 / BL2).